A 38-amino-acid chain; its full sequence is Large ribosomal subunit protein bL36 (38 aa).

Belongs to the bacterial ribosomal protein bL36 family.

The chain is Large ribosomal subunit protein bL36 from Methylacidiphilum infernorum (isolate V4) (Methylokorus infernorum (strain V4)).